Reading from the N-terminus, the 329-residue chain is Coiled-coil domain-containing protein 54 (329 aa).

Positions 86–149 form a coiled coil; it reads NIVSSISNIQ…VTELESQNSY (64 aa). The segment covering 178-191 has biased composition (polar residues); sequence TPKGTATSPDTVIS. Residues 178–214 are disordered; sequence TPKGTATSPDTVISSAEPERVSSYPEPTGELKKKTTS. At Thr182 the chain carries Phosphothreonine.

The protein is Coiled-coil domain-containing protein 54 (Ccdc54) of Mus musculus (Mouse).